A 362-amino-acid polypeptide reads, in one-letter code: Glutamate 5-kinase (362 aa).

Lys-3 is an ATP binding site. Substrate contacts are provided by Ser-43, Asp-128, and Asn-140. ATP contacts are provided by residues 160 to 161 (TD) and 202 to 208 (TGGMRTK). One can recognise a PUA domain in the interval 267 to 348 (AGAILVDAGA…REIENVLGYS (82 aa)).

It belongs to the glutamate 5-kinase family.

The protein resides in the cytoplasm. The enzyme catalyses L-glutamate + ATP = L-glutamyl 5-phosphate + ADP. It functions in the pathway amino-acid biosynthesis; L-proline biosynthesis; L-glutamate 5-semialdehyde from L-glutamate: step 1/2. Its function is as follows. Catalyzes the transfer of a phosphate group to glutamate to form L-glutamate 5-phosphate. The chain is Glutamate 5-kinase from Xanthomonas oryzae pv. oryzae (strain KACC10331 / KXO85).